The sequence spans 812 residues: Phospholipase D alpha 2 (812 aa).

Residues Met-1–Ser-36 constitute a propeptide that is removed on maturation. In terms of domain architecture, C2 spans Met-1–Val-127. One can recognise a PLD phosphodiesterase 1 domain in the interval Ala-328 to Arg-368. Residues His-333, Lys-335, and Asp-340 contribute to the active site. Position 333 (His-333) interacts with a 1,2-diacyl-sn-glycero-3-phosphate. His-374 contributes to the Ca(2+) binding site. Gln-524 and His-663 together coordinate a 1,2-diacyl-sn-glycero-3-phosphate. The PLD phosphodiesterase 2 domain maps to Phe-658–Ser-685. Residues His-663, Lys-665, and Asp-670 contribute to the active site. Glu-724 contributes to the Ca(2+) binding site.

It belongs to the phospholipase D family. C2-PLD subfamily. The cofactor is Ca(2+).

The protein localises to the cytoplasm. Its subcellular location is the membrane. It catalyses the reaction a 1,2-diacyl-sn-glycero-3-phosphocholine + H2O = a 1,2-diacyl-sn-glycero-3-phosphate + choline + H(+). Its function is as follows. Hydrolyzes glycerol-phospholipids at the terminal phosphodiesteric bond. Plays an important role in various cellular processes, including phytohormone action, vesicular trafficking, secretion, cytoskeletal arrangement, meiosis, tumor promotion, pathogenesis, membrane deterioration and senescence. This chain is Phospholipase D alpha 2 (PLD2), found in Brassica oleracea var. capitata (Cabbage).